A 420-amino-acid polypeptide reads, in one-letter code: Gamma-glutamyl phosphate reductase (420 aa).

This sequence belongs to the gamma-glutamyl phosphate reductase family.

The protein localises to the cytoplasm. It carries out the reaction L-glutamate 5-semialdehyde + phosphate + NADP(+) = L-glutamyl 5-phosphate + NADPH + H(+). It functions in the pathway amino-acid biosynthesis; L-proline biosynthesis; L-glutamate 5-semialdehyde from L-glutamate: step 2/2. Its function is as follows. Catalyzes the NADPH-dependent reduction of L-glutamate 5-phosphate into L-glutamate 5-semialdehyde and phosphate. The product spontaneously undergoes cyclization to form 1-pyrroline-5-carboxylate. This Streptococcus pneumoniae (strain JJA) protein is Gamma-glutamyl phosphate reductase.